The primary structure comprises 1286 residues: Galactose/N-acetyl-D-galactosamine lectin heavy subunit 2 (1286 aa).

The signal sequence occupies residues 1-15 (MKLLLLNILLLCCLA). Residues 16-1227 (DKLNEFSADI…NNVGAIAAAT (1212 aa)) are Extracellular-facing. N-linked (GlcNAc...) asparagine glycosylation is found at N200, N331, N384, N462, N652, N883, N1197, and N1207. Residues 1228-1248 (TVAVVVVAVVVALIVVSIGLF) traverse the membrane as a helical segment. At 1249–1286 (KTYQLVSSAMKNAITTTNENAEYVGADNEATNAATYNG) the chain is on the cytoplasmic side.

As to quaternary structure, heterodimer composed of a 170 kDa heavy subunit (hgl) and a 31/35 kDa light subunit (lgl); disulfide-linked. In terms of processing, N-glycosylated.

It localises to the cell membrane. Functionally, lectin which binds galactose and N-acetyl-D-galactosamine of host glycoproteins and thus mediates adhesion to host cells. Mediates adherence to host colonic mucins, an essential step for pathogenic tissue invasion. The protein is Galactose/N-acetyl-D-galactosamine lectin heavy subunit 2 of Entamoeba histolytica (strain ATCC 30459 / HM-1:IMSS / ABRM).